The primary structure comprises 235 residues: Ribitol-5-phosphate cytidylyltransferase (235 aa).

Residues 7-10, 82-88, and S113 contribute to the CTP site; these read LAGG and GADRNTS.

The protein belongs to the IspD/TarI cytidylyltransferase family. TarI subfamily.

It carries out the reaction D-ribitol 5-phosphate + CTP + H(+) = CDP-L-ribitol + diphosphate. Its pathway is cell wall biogenesis; poly(ribitol phosphate) teichoic acid biosynthesis. In terms of biological role, catalyzes the transfer of the cytidylyl group of CTP to D-ribitol 5-phosphate. In Streptococcus pneumoniae (strain CGSP14), this protein is Ribitol-5-phosphate cytidylyltransferase.